The sequence spans 120 residues: MVYDFKAEIVKAKNSGSHHWLLQRVTGIILALCSIWLIYFTLTNKNNDINIIMWELKKPFNVVALLITVAISLYHAMLGMRVVIEDYVSCHKLRNTLIVIVQLFCIVTIAAFVVAMFYRG.

The Cytoplasmic portion of the chain corresponds to 1–19 (MVYDFKAEIVKAKNSGSHH). The helical transmembrane segment at 20-40 (WLLQRVTGIILALCSIWLIYF) threads the bilayer. The Periplasmic portion of the chain corresponds to 41 to 62 (TLTNKNNDINIIMWELKKPFNV). A helical membrane pass occupies residues 63-84 (VALLITVAISLYHAMLGMRVVI). His-75 serves as a coordination point for heme. At 85-94 (EDYVSCHKLR) the chain is on the cytoplasmic side. Residue Tyr-87 participates in a ubiquinone binding. A helical transmembrane segment spans residues 95-118 (NTLIVIVQLFCIVTIAAFVVAMFY).

In terms of assembly, part of an enzyme complex containing four subunits: a flavoprotein, an iron-sulfur protein, plus two membrane-anchoring proteins, SdhC and SdhD. Requires heme as cofactor.

It is found in the cell inner membrane. The protein operates within carbohydrate metabolism; tricarboxylic acid cycle. Functionally, membrane-anchoring subunit of succinate dehydrogenase (SDH). The chain is Succinate dehydrogenase hydrophobic membrane anchor subunit (sdhD) from Rickettsia felis (strain ATCC VR-1525 / URRWXCal2) (Rickettsia azadi).